Reading from the N-terminus, the 983-residue chain is Pro-apoptotic serine protease NMA111 (983 aa).

A disordered region spans residues 1 to 40; it reads MSVPTKRRLSFDESTNKRFLNGTHSTENNTSNIEVDEDYG. Residues 22–33 are compositionally biased toward polar residues; the sequence is GTHSTENNTSNI. The interval 59-260 is serine protease; the sequence is WQETITKVVN…LPIYRPLRAL (202 aa). Residues H108, D139, and S222 each act as charge relay system in the active site. PDZ domains follow at residues 287-365 and 867-948; these read RRLG…QRGG and FWSG…MSFD.

It belongs to the peptidase S1C family.

The protein localises to the nucleus. Nuclear serine protease which mediates apoptosis. The polypeptide is Pro-apoptotic serine protease NMA111 (NMA111) (Scheffersomyces stipitis (strain ATCC 58785 / CBS 6054 / NBRC 10063 / NRRL Y-11545) (Yeast)).